Here is a 693-residue protein sequence, read N- to C-terminus: tRNA (guanine(37)-N(1))-methyltransferase (693 aa).

S-adenosyl-L-methionine contacts are provided by residues arginine 327, 365–366 (DI), and 392–393 (DA). Residues 497 to 572 (AGDSHQSNSH…QKAEDAPTNE (76 aa)) form a disordered region. Residues 500–512 (SHQSNSHQSNPHE) are compositionally biased toward low complexity. Asparagine 591 serves as a coordination point for S-adenosyl-L-methionine.

The protein belongs to the class I-like SAM-binding methyltransferase superfamily. TRM5/TYW2 family. As to quaternary structure, monomer.

The protein resides in the mitochondrion matrix. The protein localises to the nucleus. It localises to the cytoplasm. The catalysed reaction is guanosine(37) in tRNA + S-adenosyl-L-methionine = N(1)-methylguanosine(37) in tRNA + S-adenosyl-L-homocysteine + H(+). In terms of biological role, specifically methylates the N1 position of guanosine-37 in various cytoplasmic and mitochondrial tRNAs. Methylation is not dependent on the nature of the nucleoside 5' of the target nucleoside. This is the first step in the biosynthesis of wybutosine (yW), a modified base adjacent to the anticodon of tRNAs and required for accurate decoding. The protein is tRNA (guanine(37)-N(1))-methyltransferase of Plasmodium vivax (strain Salvador I).